Consider the following 132-residue polypeptide: MELPLPEDVASVLYLTPLAAVREVNLWNGAPPPYSMLQLWARVDHAWAKDRVGRSYPTRKSYFKSTRLLPRTLYRQYQSYRDCQCLQETSPFTREVHHTCVQLDPLSPSTDGEHSPSSGSPAVLRQHREIWF.

In terms of biological role, may play a role in infectivity. The polypeptide is Protein p15 (Panicum mosaic virus (strain United States/Kansas 109S) (PMV)).